Here is a 78-residue protein sequence, read N- to C-terminus: Omega-conotoxin-like 2 (78 aa).

The N-terminal stretch at 1-22 (MKLTCVVIVAVLLLTACQLITA) is a signal peptide. The propeptide occupies 23–42 (DDSRGTQKHRSLRSTTKVSK). Intrachain disulfides connect cysteine 46/cysteine 62, cysteine 53/cysteine 65, and cysteine 61/cysteine 72.

Belongs to the conotoxin O1 superfamily. As to expression, expressed by the venom duct.

It is found in the secreted. Its function is as follows. Omega-conotoxins act at presynaptic membranes, they bind and block voltage-gated calcium channels (Cav). The chain is Omega-conotoxin-like 2 from Conus striatus (Striated cone).